The primary structure comprises 149 residues: Ribonuclease pancreatic (149 aa).

Residues 1 to 25 form the signal peptide; it reads MGLEKSFILFSLLVLVLGWVQPSLS. Basic and acidic residues predominate over residues 30-40; sequence ADKFKRQHMDT. Positions 30 to 49 are disordered; sequence ADKFKRQHMDTEGSSNSSPT. Substrate contacts are provided by lysine 32 and arginine 35. Histidine 37 (proton acceptor) is an active-site residue. 4 cysteine pairs are disulfide-bonded: cysteine 51/cysteine 109, cysteine 65/cysteine 120, cysteine 83/cysteine 135, and cysteine 90/cysteine 97. Asparagine 62 is a glycosylation site (N-linked (GlcNAc...) asparagine). 66 to 70 serves as a coordination point for substrate; sequence KPVNT. A glycan (N-linked (GlcNAc...) asparagine) is linked at asparagine 87. 2 residues coordinate substrate: lysine 91 and arginine 110. Residue histidine 144 is the Proton donor of the active site.

The protein belongs to the pancreatic ribonuclease family. As to quaternary structure, monomer. Interacts with and forms tight 1:1 complexes with RNH1. Dimerization of two such complexes may occur. Interaction with RNH1 inhibits this protein. As to expression, pancreas.

The protein resides in the secreted. It carries out the reaction an [RNA] containing cytidine + H2O = an [RNA]-3'-cytidine-3'-phosphate + a 5'-hydroxy-ribonucleotide-3'-[RNA].. It catalyses the reaction an [RNA] containing uridine + H2O = an [RNA]-3'-uridine-3'-phosphate + a 5'-hydroxy-ribonucleotide-3'-[RNA].. Its function is as follows. Endonuclease that catalyzes the cleavage of RNA on the 3' side of pyrimidine nucleotides. Acts on single-stranded and double-stranded RNA. This is Ribonuclease pancreatic (RNASE1) from Niviventer cremoriventer (Dark-tailed tree rat).